The primary structure comprises 137 residues: Acidic phospholipase A2 Vur-PL3 (137 aa).

Positions 1 to 16 (MRTLWIVAVCLIGVEG) are cleaved as a signal peptide. 7 cysteine pairs are disulfide-bonded: Cys-42-Cys-131, Cys-44-Cys-60, Cys-59-Cys-111, Cys-65-Cys-137, Cys-66-Cys-104, Cys-73-Cys-97, and Cys-91-Cys-102. Ca(2+) is bound by residues Tyr-43, Gly-45, and Gly-47. His-63 is an active-site residue. Residue Asp-64 participates in Ca(2+) binding. The active site involves Asp-105.

Ca(2+) is required as a cofactor. In terms of tissue distribution, expressed by the venom gland.

It is found in the secreted. The catalysed reaction is a 1,2-diacyl-sn-glycero-3-phosphocholine + H2O = a 1-acyl-sn-glycero-3-phosphocholine + a fatty acid + H(+). The polypeptide is Acidic phospholipase A2 Vur-PL3 (Vipera renardi (Steppe viper)).